The primary structure comprises 426 residues: Bone morphogenetic protein 7 (426 aa).

Positions 1-22 (MNALTVKRRLPVLLFLFHISLS) are cleaved as a signal peptide. Positions 23–282 (SISSNTILEN…TSDIHLRSVR (260 aa)) are excised as a propeptide. N177, N307, and N367 each carry an N-linked (GlcNAc...) asparagine glycan. Cystine bridges form between C325–C391, C354–C423, and C358–C425.

Belongs to the TGF-beta family. In terms of assembly, homodimer; disulfide-linked. Interacts with twsg1.

Its subcellular location is the secreted. Growth factor of the TGF-beta superfamily that plays important role in various biological processes, including embryogenesis, hematopoiesis, neurogenesis and skeletal morphogenesis. Initiates the canonical BMP signaling cascade by associating with type I receptor ACVR1 and type II receptor ACVR2A. Once all three components are bound together in a complex at the cell surface, ACVR2A phosphorylates and activates ACVR1. In turn, ACVR1 propagates signal by phosphorylating SMAD1/5/8 that travel to the nucleus and act as activators and repressors of transcription of target genes. In Xenopus laevis (African clawed frog), this protein is Bone morphogenetic protein 7 (bmp7).